The following is a 59-amino-acid chain: Arabinogalactan protein 13 (59 aa).

An N-terminal signal peptide occupies residues 1–27 (MEAMKMRLFVAVLVAAMAFSAVQQAAA). 3 positions are modified to 4-hydroxyproline: Pro-31, Pro-33, and Pro-35. Residues Pro-31, Pro-33, and Pro-35 are each glycosylated (O-linked (Ara...) hydroxyproline). Ser-37 carries the GPI-anchor amidated serine lipid modification. Residues 38–59 (DASLAIPAFFASVATLAFGFLF) constitute a propeptide, removed in mature form.

The protein belongs to the AG-peptide AGP family. Contains 4-hydroxyproline; hydroxylated on Pro-31, Pro-33 and Pro-35. In terms of processing, O-glycosylated on hydroxyprolines; noncontiguous hydroxylproline residues are glycosylated with arabinogalactan.

It localises to the cell membrane. Its function is as follows. Proteoglycan that seems to be implicated in diverse developmental roles such as differentiation, cell-cell recognition, embryogenesis and programmed cell death. This is Arabinogalactan protein 13 from Arabidopsis thaliana (Mouse-ear cress).